Consider the following 230-residue polypeptide: Large ribosomal subunit protein uL1 (230 aa).

The protein belongs to the universal ribosomal protein uL1 family. In terms of assembly, part of the 50S ribosomal subunit.

Functionally, binds directly to 23S rRNA. The L1 stalk is quite mobile in the ribosome, and is involved in E site tRNA release. In terms of biological role, protein L1 is also a translational repressor protein, it controls the translation of the L11 operon by binding to its mRNA. The chain is Large ribosomal subunit protein uL1 from Lactobacillus johnsonii (strain CNCM I-12250 / La1 / NCC 533).